Here is a 500-residue protein sequence, read N- to C-terminus: Cobyric acid synthase (500 aa).

The GATase cobBQ-type domain maps to 251–449; it reads KLNIVIPIMP…LHGVFDHPDA (199 aa). Catalysis depends on Cys332, which acts as the Nucleophile. The active site involves His441.

It belongs to the CobB/CobQ family. CobQ subfamily.

Its pathway is cofactor biosynthesis; adenosylcobalamin biosynthesis. Catalyzes amidations at positions B, D, E, and G on adenosylcobyrinic A,C-diamide. NH(2) groups are provided by glutamine, and one molecule of ATP is hydrogenolyzed for each amidation. This chain is Cobyric acid synthase, found in Marinomonas sp. (strain MWYL1).